A 397-amino-acid polypeptide reads, in one-letter code: Cathepsin E-B (397 aa).

The signal sequence occupies residues 1–16; the sequence is MRQILVLLLFVTLVYG. Positions 17 to 49 are cleaved as a propeptide — activation peptide; the sequence is LIRVPLKRQKSIRKTPKEKGKLSHVWTQQGIDM. The region spanning 74–385 is the Peptidase A1 domain; sequence YFGEISIGTP…DRGNNRVGLA (312 aa). Residue Asn86 is glycosylated (N-linked (GlcNAc...) asparagine). Asp92 is a catalytic residue. Cys105 and Cys110 form a disulfide bridge. Asn130 carries N-linked (GlcNAc...) asparagine glycosylation. Cys268 and Cys272 are joined by a disulfide. The active site involves Asp277. Cys310 and Cys344 form a disulfide bridge.

Belongs to the peptidase A1 family. In terms of assembly, homodimer; disulfide-linked. Glycosylated. Contains high mannose-type oligosaccharide. In terms of tissue distribution, expressed predominantly in the anterior and posterior adult stomach and at much lower levels in the larval foregut.

It localises to the endosome. The enzyme catalyses Similar to cathepsin D, but slightly broader specificity.. Functionally, may have a role in immune function. Probably involved in the processing of antigenic peptides during MHC class II-mediated antigen presentation. The polypeptide is Cathepsin E-B (ctse-b) (Xenopus laevis (African clawed frog)).